We begin with the raw amino-acid sequence, 200 residues long: Putative pseudouridine methyltransferase (200 aa).

S-adenosyl-L-methionine is bound by residues Met-133 and Cys-187.

It belongs to the methyltransferase superfamily. TrmY family.

It is found in the cytoplasm. The sequence is that of Putative pseudouridine methyltransferase from Alcanivorax borkumensis (strain ATCC 700651 / DSM 11573 / NCIMB 13689 / SK2).